A 49-amino-acid chain; its full sequence is RTCESQSHKFKGPCFSDSNCATVCRTENFPRGQCNQHHVERKCYCERSC.

Intrachain disulfides connect Cys3/Cys49, Cys14/Cys34, Cys20/Cys43, and Cys24/Cys45.

Its function is as follows. Plant defense peptide. The sequence is that of Defensin Tk-AMP-D2 from Triticum kiharae (Wheat).